The primary structure comprises 332 residues: Elongin-A (332 aa).

Residues 24–68 (LEDIGHMPYALVRRVLLKMSAEQLLRLERASPALLLEDEEAWQQL) form the F-box domain. The disordered stretch occupies residues 228–332 (TPSAQPAASL…KPRVYIHTPR (105 aa)). Over residues 296–309 (LFSSPALSTLLPQQ) the composition is skewed to polar residues. Residues 320 to 332 (PPKKPRVYIHTPR) are compositionally biased toward basic residues.

This sequence belongs to the ELA1 family. In terms of assembly, heterodimer with ELC1. Component of a CRL3 E3 ubiquitin ligase complex consisting of a cullin, the linker protein ELC1, the substrate receptor ELA1, and a RING protein. Interacts with the large RNA polymerase II subunit RPO21 in a manner dependent on DEF1.

Its function is as follows. As part of the CRL3 E3 ubiquitin ligase complex; polyubiquitylates monoubiquitylated RNA polymerase II subunit RPO21 to trigger its proteolysis; plays a role in global genomic repair. This is Elongin-A (ELA1) from Eremothecium gossypii (strain ATCC 10895 / CBS 109.51 / FGSC 9923 / NRRL Y-1056) (Yeast).